The chain runs to 201 residues: L-rhamnose-binding lectin SML (201 aa).

8 disulfides stabilise this stretch: cysteine 10–cysteine 40, cysteine 20–cysteine 99, cysteine 54–cysteine 86, cysteine 67–cysteine 73, cysteine 108–cysteine 138, cysteine 117–cysteine 195, cysteine 152–cysteine 182, and cysteine 163–cysteine 169. 2 SUEL-type lectin domains span residues 18–100 (LSCD…YNCF) and 107–196 (TCEH…YVCQ). N-linked (GlcNAc...) asparagine glycosylation occurs at asparagine 168.

As to quaternary structure, homodimer; non-covalently linked.

In terms of biological role, rhamnose-binding lectin. Also binds melibiose, raffinose, D-galactose, L-arabinose, D-fucose, maltose and D-glucose with decreasing affinity. Does not bind D-arabinose, L-fucose, lactose, xylose or 2-deoxy-D-galactose. Shows strong hemagglutinating activity against rabbit erythrocytes. The protein is L-rhamnose-binding lectin SML of Scomberomorus niphonius (Japanese Spanish mackerel).